Reading from the N-terminus, the 326-residue chain is Tetraketide alpha-pyrone reductase 1 (326 aa).

NADP(+)-binding positions include 8-32 (VCVT…GYEV), K44, and Y162.

Belongs to the NAD(P)-dependent epimerase/dehydratase family. Dihydroflavonol-4-reductase subfamily. Interacts with 4CLL1/ACOS5, PKSA and PKSB. As to expression, specifically expressed in anther tapetal cells during microspores development.

It is found in the cytoplasm. It localises to the nucleus. Its subcellular location is the endoplasmic reticulum. Involved in the biosynthesis of hydroxylated tetraketide compounds that serve as sporopollenin precursors (the main constituents of exine). Is essential for pollen wall development. Acts on tetraketide alpha-pyrones and reduces the carbonyl function on the tetraketide alkyl chain to a secondary alcohol function. In Arabidopsis thaliana (Mouse-ear cress), this protein is Tetraketide alpha-pyrone reductase 1 (TKPR1).